We begin with the raw amino-acid sequence, 152 residues long: uncharacterized protein (152 aa).

Residues 12–34 (ALLYLGGGLLAMIYGLITFFMAF) form a helical membrane-spanning segment.

It to B.subtilis YfjD.

Its subcellular location is the membrane. This is an uncharacterized protein from Bacillus subtilis (strain 168).